The following is a 671-amino-acid chain: ABC transporter ATP-binding protein/permease wht-1 (671 aa).

The Cytoplasmic segment spans residues 1–408 (MHKAPISTLI…SWLTVIRDPN (408 aa)). The region spanning 64-310 (TNFVDRFRNN…FEKCGYPCPA (247 aa)) is the ABC transporter domain. 100 to 107 (GSSGAGKT) is a binding site for ATP. Residues 409–429 (LLSVRLLQILITAFITGIVFF) form a helical membrane-spanning segment. At 430–451 (QTPVTPATIISINGIMFNHIRN) the chain is on the extracellular side. A helical transmembrane segment spans residues 452–472 (MNFMLQFPNVPVITAELPIVL). At 473–497 (RENANGVYRTSAYFLAKNIAELPQY) the chain is on the cytoplasmic side. The chain crosses the membrane as a helical span at residues 498-518 (IILPILYNTIVYWMSGLYPNF). Topologically, residues 519 to 525 (WNYCFAS) are extracellular. Residues 526-546 (LVTILITNVAISISYAVATIF) traverse the membrane as a helical segment. Residues 547–550 (ANTD) lie on the Cytoplasmic side of the membrane. A helical membrane pass occupies residues 551-571 (VAMTILPIFVVPIMAFGGFFI). The Extracellular portion of the chain corresponds to 572 to 644 (TFDAIPSYFK…DFSASHKIFD (73 aa)). The chain crosses the membrane as a helical span at residues 645–665 (ISILFGMFIGIRIIAYVALLI). The Cytoplasmic segment spans residues 666-671 (RSYNNT).

Belongs to the ABC transporter superfamily. ABCG family. Eye pigment precursor importer (TC 3.A.1.204) subfamily. Expressed in the intestine in both larvae and adults. Expressed in the gut of males.

It localises to the membrane. Its function is as follows. Required for efficient RNA interference (RNAi). Plays a role in germline development. In Caenorhabditis elegans, this protein is ABC transporter ATP-binding protein/permease wht-1.